The primary structure comprises 424 residues: Proline--tRNA ligase (424 aa).

The protein belongs to the class-II aminoacyl-tRNA synthetase family. ProS type 2 subfamily. Homodimer.

The protein localises to the cytoplasm. It carries out the reaction tRNA(Pro) + L-proline + ATP = L-prolyl-tRNA(Pro) + AMP + diphosphate. In terms of biological role, catalyzes the attachment of proline to tRNA(Pro) in a two-step reaction: proline is first activated by ATP to form Pro-AMP and then transferred to the acceptor end of tRNA(Pro). The polypeptide is Proline--tRNA ligase (Ehrlichia canis (strain Jake)).